The sequence spans 199 residues: Imidazoleglycerol-phosphate dehydratase (199 aa).

It belongs to the imidazoleglycerol-phosphate dehydratase family.

It localises to the cytoplasm. The enzyme catalyses D-erythro-1-(imidazol-4-yl)glycerol 3-phosphate = 3-(imidazol-4-yl)-2-oxopropyl phosphate + H2O. The protein operates within amino-acid biosynthesis; L-histidine biosynthesis; L-histidine from 5-phospho-alpha-D-ribose 1-diphosphate: step 6/9. The chain is Imidazoleglycerol-phosphate dehydratase from Desulfotalea psychrophila (strain LSv54 / DSM 12343).